The primary structure comprises 141 residues: Translation initiation factor IF-1, chloroplastic (141 aa).

Residues 1–46 (MLQLCSTFRPQLLLPCQFRFTNGVLIPQINYVASNSVVNIRPMIRC) constitute a chloroplast transit peptide. The disordered stretch occupies residues 49–69 (ASGGRGGANRSKPAKPQVKEG). Residues 63–138 (KPQVKEGSNK…TKGRIIFRMS (76 aa)) enclose the S1-like domain.

Belongs to the IF-1 family. As to quaternary structure, component of the 30S ribosomal translation pre-initiation complex which assembles on the 30S ribosome in the order IF-2 and IF-3, IF-1 and N-formylmethionyl-tRNA(fMet); mRNA recruitment can occur at any time during PIC assembly.

The protein resides in the plastid. The protein localises to the chloroplast. Its function is as follows. One of the essential components for the initiation of protein synthesis. Stabilizes the binding of IF-2 and IF-3 on the 30S subunit to which N-formylmethionyl-tRNA(fMet) subsequently binds. Helps modulate mRNA selection, yielding the 30S pre-initiation complex (PIC). Upon addition of the 50S ribosomal subunit IF-1, IF-2 and IF-3 are released leaving the mature 70S translation initiation complex. The polypeptide is Translation initiation factor IF-1, chloroplastic (Arabidopsis thaliana (Mouse-ear cress)).